The sequence spans 924 residues: Isoleucine--tRNA ligase (924 aa).

The 'HIGH' region motif lies at 57–67 (PYANGDIHMGH). Glutamate 552 provides a ligand contact to L-isoleucyl-5'-AMP. The short motif at 593-597 (KMSKS) is the 'KMSKS' region element. Residue lysine 596 participates in ATP binding. Zn(2+)-binding residues include cysteine 891, cysteine 894, cysteine 911, and cysteine 914.

The protein belongs to the class-I aminoacyl-tRNA synthetase family. IleS type 1 subfamily. Monomer. The cofactor is Zn(2+).

The protein localises to the cytoplasm. The catalysed reaction is tRNA(Ile) + L-isoleucine + ATP = L-isoleucyl-tRNA(Ile) + AMP + diphosphate. Functionally, catalyzes the attachment of isoleucine to tRNA(Ile). As IleRS can inadvertently accommodate and process structurally similar amino acids such as valine, to avoid such errors it has two additional distinct tRNA(Ile)-dependent editing activities. One activity is designated as 'pretransfer' editing and involves the hydrolysis of activated Val-AMP. The other activity is designated 'posttransfer' editing and involves deacylation of mischarged Val-tRNA(Ile). In Geobacillus thermodenitrificans (strain NG80-2), this protein is Isoleucine--tRNA ligase.